We begin with the raw amino-acid sequence, 93 residues long: MKLLMVLMLAALSQHCYAGSGCPLLENVISKTINPQVSKTEYKELLQEFIDDNATTNAIDELKECFLNQTDETLSNVEVFMQLIYDSSLCDLF.

The first 18 residues, 1–18, serve as a signal peptide directing secretion; that stretch reads MKLLMVLMLAALSQHCYA. N-linked (GlcNAc...) asparagine glycans are attached at residues Asn53 and Asn68.

Belongs to the secretoglobin family. Lipophilin subfamily. In terms of tissue distribution, mammary gland specific. Over-expressed in breast cancer.

The protein resides in the secreted. The chain is Mammaglobin-A (SCGB2A2) from Homo sapiens (Human).